Here is a 339-residue protein sequence, read N- to C-terminus: Anthranilate phosphoribosyltransferase (339 aa).

5-phospho-alpha-D-ribose 1-diphosphate-binding positions include Gly81, 84–85, Thr89, 91–94, 109–117, and Ser121; these read GD, NIST, and KHGNRSVSS. Gly81 contacts anthranilate. Ser93 is a binding site for Mg(2+). Asn112 is a binding site for anthranilate. Residue Arg165 coordinates anthranilate. Positions 224 and 225 each coordinate Mg(2+).

This sequence belongs to the anthranilate phosphoribosyltransferase family. In terms of assembly, homodimer. It depends on Mg(2+) as a cofactor.

The enzyme catalyses N-(5-phospho-beta-D-ribosyl)anthranilate + diphosphate = 5-phospho-alpha-D-ribose 1-diphosphate + anthranilate. It participates in amino-acid biosynthesis; L-tryptophan biosynthesis; L-tryptophan from chorismate: step 2/5. Functionally, catalyzes the transfer of the phosphoribosyl group of 5-phosphorylribose-1-pyrophosphate (PRPP) to anthranilate to yield N-(5'-phosphoribosyl)-anthranilate (PRA). The protein is Anthranilate phosphoribosyltransferase of Thermosynechococcus vestitus (strain NIES-2133 / IAM M-273 / BP-1).